The primary structure comprises 90 residues: Small ribosomal subunit protein uS15 (90 aa).

The protein belongs to the universal ribosomal protein uS15 family. In terms of assembly, part of the 30S ribosomal subunit. Forms a bridge to the 50S subunit in the 70S ribosome, contacting the 23S rRNA.

In terms of biological role, one of the primary rRNA binding proteins, it binds directly to 16S rRNA where it helps nucleate assembly of the platform of the 30S subunit by binding and bridging several RNA helices of the 16S rRNA. Its function is as follows. Forms an intersubunit bridge (bridge B4) with the 23S rRNA of the 50S subunit in the ribosome. The sequence is that of Small ribosomal subunit protein uS15 from Wolbachia pipientis wMel.